The sequence spans 125 residues: MWSVQKLLWGCRSLLPQGCRSFSLGNRDLRKVDFMPQPKNTDRWDNKRALYGVYDNIGILGDFKAHPRDLIIGPFWLRGWKGNELQRCIRKRQMVGPRMFYQDRENLTKRIRFLYKRFNRYGKHR.

Residues 1-29 constitute a mitochondrion transit peptide; sequence MWSVQKLLWGCRSLLPQGCRSFSLGNRDL.

Belongs to the mitochondrion-specific ribosomal protein mL51 family. Component of the mitochondrial ribosome large subunit (39S) which comprises a 16S rRNA and about 50 distinct proteins.

Its subcellular location is the mitochondrion. The chain is Large ribosomal subunit protein mL51 (mrpl51) from Xenopus laevis (African clawed frog).